Here is a 186-residue protein sequence, read N- to C-terminus: dCTP deaminase, dUMP-forming (186 aa).

DCTP-binding positions include 101-106, aspartate 119, 127-129, glutamine 148, tyrosine 162, and glutamine 171; these read RSSLGR and TLE. Catalysis depends on glutamate 129, which acts as the Proton donor/acceptor.

This sequence belongs to the dCTP deaminase family. As to quaternary structure, homotrimer.

The catalysed reaction is dCTP + 2 H2O = dUMP + NH4(+) + diphosphate. The protein operates within pyrimidine metabolism; dUMP biosynthesis; dUMP from dCTP: step 1/1. Its function is as follows. Bifunctional enzyme that catalyzes both the deamination of dCTP to dUTP and the hydrolysis of dUTP to dUMP without releasing the toxic dUTP intermediate. The chain is dCTP deaminase, dUMP-forming from Coprothermobacter proteolyticus (strain ATCC 35245 / DSM 5265 / OCM 4 / BT).